The following is a 1145-amino-acid chain: Probable ATP-dependent RNA helicase DHX34 (1145 aa).

Residues 1–14 are compositionally biased toward basic and acidic residues; it reads MPPPRTREGRGHRD. Positions 1–27 are disordered; the sequence is MPPPRTREGRGHRDRDHHRAPREEEAP. Residues 174–334 enclose the Helicase ATP-binding domain; the sequence is LQTLKEHQVV…FSHAPVVQVP (161 aa). 187 to 194 provides a ligand contact to ATP; sequence GDTGCGKS. The DEAH box motif lies at 281 to 284; it reads DEVH. The 169-residue stretch at 370–538 folds into the Helicase C-terminal domain; sequence AIDNKYPPEE…ALVLQMKSMS (169 aa). Disordered stretches follow at residues 726 to 764 and 1091 to 1114; these read LKRQHEEGGGRRRKVLRLQEDGCSSDEEDRKGSTSQRAD and NTCPEAPGDDPGSEEAAPAPPQKT. Residues Ser749 and Ser750 each carry the phosphoserine modification.

The protein belongs to the DEAD box helicase family. DEAH subfamily. As to quaternary structure, forms a complex with RUVBL1 and RUVBL2. Part of a complex composed of SMG1, DHX34 and UPF1; within the complex DHX34 acts as a scaffolding protein to facilitate SMG1 phosphorylation of UPF1. Interacts with UPF1, MOV10, EIF4A3, XRN2, SMG6, SMG7, SMG9, UPF3A, UPF3B, CASC3/MLN51, XRN1, DIS3 and DCP1A; the interactions are RNA-independent. Interacts with NCBP1/CPB80; the interaction is RNA-dependent. Interacts (via C-terminus) with SMG1; the interaction is RNA-independent.

The catalysed reaction is ATP + H2O = ADP + phosphate + H(+). Probable ATP-binding RNA helicase. Required for nonsense-mediated decay (NMD) degradation of mRNA transcripts containing premature stop codons. Promotes the phosphorylation of UPF1 along with its interaction with key NMD pathway proteins UPF2 and EIF4A3. Negatively regulates the nucleotide binding ability and ATP hydrolysis of the RUVBL1-RUVBL2 complex via induction of N-terminus conformation changes of the RUVBL2 subunits. This Mus musculus (Mouse) protein is Probable ATP-dependent RNA helicase DHX34.